A 193-amino-acid chain; its full sequence is Acyl carrier protein phosphodiesterase (193 aa).

This sequence belongs to the AcpH family.

It catalyses the reaction holo-[ACP] + H2O = apo-[ACP] + (R)-4'-phosphopantetheine + H(+). Its function is as follows. Converts holo-ACP to apo-ACP by hydrolytic cleavage of the phosphopantetheine prosthetic group from ACP. In Klebsiella pneumoniae subsp. pneumoniae (strain ATCC 700721 / MGH 78578), this protein is Acyl carrier protein phosphodiesterase.